We begin with the raw amino-acid sequence, 268 residues long: NH(3)-dependent NAD(+) synthetase (268 aa).

46-53 (GISGGQDS) provides a ligand contact to ATP. Residue aspartate 52 participates in Mg(2+) binding. Arginine 140 is a binding site for deamido-NAD(+). An ATP-binding site is contributed by threonine 160. Glutamate 165 contacts Mg(2+). Deamido-NAD(+)-binding residues include lysine 173 and aspartate 180. Positions 189 and 211 each coordinate ATP. A deamido-NAD(+)-binding site is contributed by 260 to 261 (HK).

Belongs to the NAD synthetase family. In terms of assembly, homodimer.

The enzyme catalyses deamido-NAD(+) + NH4(+) + ATP = AMP + diphosphate + NAD(+) + H(+). The protein operates within cofactor biosynthesis; NAD(+) biosynthesis; NAD(+) from deamido-NAD(+) (ammonia route): step 1/1. In terms of biological role, catalyzes the ATP-dependent amidation of deamido-NAD to form NAD. Uses ammonia as a nitrogen source. The sequence is that of NH(3)-dependent NAD(+) synthetase from Buchnera aphidicola subsp. Schizaphis graminum (strain Sg).